The following is a 277-amino-acid chain: 3-methyl-2-oxobutanoate hydroxymethyltransferase (277 aa).

Positions 53 and 96 each coordinate Mg(2+). 3-methyl-2-oxobutanoate contacts are provided by residues 53–54 (DS), Asp-96, and Lys-126. Glu-128 lines the Mg(2+) pocket. Glu-195 serves as the catalytic Proton acceptor.

This sequence belongs to the PanB family. In terms of assembly, homodecamer; pentamer of dimers. It depends on Mg(2+) as a cofactor.

The protein localises to the cytoplasm. It catalyses the reaction 3-methyl-2-oxobutanoate + (6R)-5,10-methylene-5,6,7,8-tetrahydrofolate + H2O = 2-dehydropantoate + (6S)-5,6,7,8-tetrahydrofolate. It participates in cofactor biosynthesis; (R)-pantothenate biosynthesis; (R)-pantoate from 3-methyl-2-oxobutanoate: step 1/2. Catalyzes the reversible reaction in which hydroxymethyl group from 5,10-methylenetetrahydrofolate is transferred onto alpha-ketoisovalerate to form ketopantoate. The protein is 3-methyl-2-oxobutanoate hydroxymethyltransferase of Prosthecochloris aestuarii (strain DSM 271 / SK 413).